Here is an 89-residue protein sequence, read N- to C-terminus: Small ribosomal subunit protein uS15 (89 aa).

Residues 1 to 16 show a composition bias toward basic and acidic residues; sequence MSVADIKKQDIVKDNG. Residues 1–24 form a disordered region; that stretch reads MSVADIKKQDIVKDNGRSANDTGS.

The protein belongs to the universal ribosomal protein uS15 family. Part of the 30S ribosomal subunit. Forms a bridge to the 50S subunit in the 70S ribosome, contacting the 23S rRNA.

In terms of biological role, one of the primary rRNA binding proteins, it binds directly to 16S rRNA where it helps nucleate assembly of the platform of the 30S subunit by binding and bridging several RNA helices of the 16S rRNA. Forms an intersubunit bridge (bridge B4) with the 23S rRNA of the 50S subunit in the ribosome. The chain is Small ribosomal subunit protein uS15 from Ralstonia pickettii (strain 12J).